Here is a 273-residue protein sequence, read N- to C-terminus: Hemin import ATP-binding protein HmuV (273 aa).

The 255-residue stretch at 2 to 256 folds into the ABC transporter domain; that stretch reads LTAHHLDVAR…AHIAQCYGFA (255 aa). 34-41 contacts ATP; the sequence is GRNGAGKS.

This sequence belongs to the ABC transporter superfamily. Heme (hemin) importer (TC 3.A.1.14.5) family. In terms of assembly, the complex is composed of two ATP-binding proteins (HmuV), two transmembrane proteins (HmuU) and a solute-binding protein (HmuT).

The protein resides in the cell inner membrane. Part of the ABC transporter complex HmuTUV involved in hemin import. Responsible for energy coupling to the transport system. This is Hemin import ATP-binding protein HmuV from Burkholderia lata (strain ATCC 17760 / DSM 23089 / LMG 22485 / NCIMB 9086 / R18194 / 383).